The sequence spans 289 residues: Heme oxygenase 1 (289 aa).

Over 1-266 (MERPQLDSMS…SQISTSSSQT (266 aa)) the chain is Cytoplasmic. K18, H25, Y134, and R183 together coordinate heme b. A disordered region spans residues 225 to 261 (HKDQSPSQTEFLRQRPASLVQDTTSAETPRGKSQIST). Phosphoserine is present on residues S229 and S242. Over residues 244-261 (VQDTTSAETPRGKSQIST) the composition is skewed to polar residues. Residues 267-289 (PLLRWVLTLSFLLATVAVGIYAM) traverse the membrane as a helical; Anchor for type IV membrane protein segment.

Belongs to the heme oxygenase family. In terms of assembly, homodimer and higher order homooligomer. Oligomerization is crucial for its stability and function in the endoplasmic reticulum. Interacts with FLVCR2; this interaction is potentiated in the presence of heme. Post-translationally, a soluble form arises by proteolytic removal of the membrane anchor.

It localises to the endoplasmic reticulum membrane. The enzyme catalyses heme b + 3 reduced [NADPH--hemoprotein reductase] + 3 O2 = biliverdin IXalpha + CO + Fe(2+) + 3 oxidized [NADPH--hemoprotein reductase] + 3 H2O + H(+). With respect to regulation, inhibited by metalloporphyrins such as Sn- and Zn-protoporphyrins. Catalyzes the oxidative cleavage of heme at the alpha-methene bridge carbon, released as carbon monoxide (CO), to generate biliverdin IXalpha, while releasing the central heme iron chelate as ferrous iron. Affords protection against programmed cell death and this cytoprotective effect relies on its ability to catabolize free heme and prevent it from sensitizing cells to undergo apoptosis. Functionally, catalyzes the oxidative cleavage of heme at the alpha-methene bridge carbon, released as carbon monoxide (CO), to generate biliverdin IXalpha, while releasing the central heme iron chelate as ferrous iron. The protein is Heme oxygenase 1 (Hmox1) of Rattus norvegicus (Rat).